The sequence spans 279 residues: Aldo-keto reductase Mvan_2161 (279 aa).

The Proton donor role is filled by tyrosine 54. 9 residues coordinate NADPH: leucine 194, valine 196, isoleucine 232, arginine 234, serine 235, arginine 240, serine 243, asparagine 244, and arginine 270.

It belongs to the aldo/keto reductase family.

The sequence is that of Aldo-keto reductase Mvan_2161 from Mycolicibacterium vanbaalenii (strain DSM 7251 / JCM 13017 / BCRC 16820 / KCTC 9966 / NRRL B-24157 / PYR-1) (Mycobacterium vanbaalenii).